The chain runs to 457 residues: RuvB-like helicase 1 (457 aa).

73–80 (GGPSTGKT) is an ATP binding site.

It belongs to the RuvB family. In terms of assembly, may form heterododecamers with RVB2. Component of the SWR1 chromatin remodeling complex, the INO80 chromatin remodeling complex, and of the R2TP complex.

The protein resides in the nucleus. It carries out the reaction ATP + H2O = ADP + phosphate + H(+). Functionally, DNA helicase which participates in several chromatin remodeling complexes, including the SWR1 and the INO80 complexes. The SWR1 complex mediates the ATP-dependent exchange of histone H2A for the H2A variant HZT1 leading to transcriptional regulation of selected genes by chromatin remodeling. The INO80 complex remodels chromatin by shifting nucleosomes and is involved in DNA repair. Also involved in pre-rRNA processing. This Candida glabrata (strain ATCC 2001 / BCRC 20586 / JCM 3761 / NBRC 0622 / NRRL Y-65 / CBS 138) (Yeast) protein is RuvB-like helicase 1 (RVB1).